The chain runs to 459 residues: Cysteine--tRNA ligase (459 aa).

Zn(2+) is bound at residue Cys-28. The 'HIGH' region signature appears at 30-40; the sequence is ITIYDLCHIGH. Zn(2+)-binding residues include Cys-209, His-234, and Glu-238. The short motif at 266 to 270 is the 'KMSKS' region element; it reads KMSKS. Lys-269 serves as a coordination point for ATP.

This sequence belongs to the class-I aminoacyl-tRNA synthetase family. In terms of assembly, monomer. Zn(2+) is required as a cofactor.

Its subcellular location is the cytoplasm. The catalysed reaction is tRNA(Cys) + L-cysteine + ATP = L-cysteinyl-tRNA(Cys) + AMP + diphosphate. This is Cysteine--tRNA ligase from Shewanella woodyi (strain ATCC 51908 / MS32).